A 193-amino-acid polypeptide reads, in one-letter code: Holliday junction branch migration complex subunit RuvA (193 aa).

Residues 1–64 (MIGRIAGTLL…EDAHLLYGFL (64 aa)) are domain I. The domain II stretch occupies residues 65–139 (TPQERSTFRE…GKLGADLGPL (75 aa)). Residues 139 to 143 (LAGAA) are flexible linker. Residues 144–193 (SPSDHAADILNALLALGYSEKEALAAIKNVPAGTGVSEGIKLSLKALSKA) form a domain III region.

The protein belongs to the RuvA family. Homotetramer. Forms an RuvA(8)-RuvB(12)-Holliday junction (HJ) complex. HJ DNA is sandwiched between 2 RuvA tetramers; dsDNA enters through RuvA and exits via RuvB. An RuvB hexamer assembles on each DNA strand where it exits the tetramer. Each RuvB hexamer is contacted by two RuvA subunits (via domain III) on 2 adjacent RuvB subunits; this complex drives branch migration. In the full resolvosome a probable DNA-RuvA(4)-RuvB(12)-RuvC(2) complex forms which resolves the HJ.

It is found in the cytoplasm. In terms of biological role, the RuvA-RuvB-RuvC complex processes Holliday junction (HJ) DNA during genetic recombination and DNA repair, while the RuvA-RuvB complex plays an important role in the rescue of blocked DNA replication forks via replication fork reversal (RFR). RuvA specifically binds to HJ cruciform DNA, conferring on it an open structure. The RuvB hexamer acts as an ATP-dependent pump, pulling dsDNA into and through the RuvAB complex. HJ branch migration allows RuvC to scan DNA until it finds its consensus sequence, where it cleaves and resolves the cruciform DNA. The polypeptide is Holliday junction branch migration complex subunit RuvA (Burkholderia thailandensis (strain ATCC 700388 / DSM 13276 / CCUG 48851 / CIP 106301 / E264)).